Consider the following 446-residue polypeptide: Forkhead box protein F2 (446 aa).

Residues 1 to 18 (MSTEGGPPPPPPRPPPAP) are compositionally biased toward pro residues. The tract at residues 1-97 (MSTEGGPPPP…TKKATSGLRR (97 aa)) is disordered. Low complexity predominate over residues 45-78 (STSSSSSSSSASCASSSSNSVSASAGACKSAASS). Residues 100–194 (KPPYSYIALI…EEGSFRRRPR (95 aa)) constitute a DNA-binding region (fork-head). Disordered stretches follow at residues 257 to 278 (AGAP…HMSP), 304 to 325 (GGGG…SPAM), and 340 to 371 (AHWS…GLHP). The span at 263 to 274 (AHPHHLHHHHVP) shows a compositional bias: basic residues. Residues 311–325 (GPDSSSSPVPSSPAM) are compositionally biased toward low complexity.

As to quaternary structure, interacts with the transcription factors TBP and TFIIB. As to expression, uniquely expressed in the bronchiolar epithelium and in type II pneumocytes.

The protein localises to the nucleus. Its function is as follows. Probable transcription activator for a number of lung-specific genes. Mediates up-regulation of the E3 ligase IRF2BPL and drives ubiquitination and degradation of CTNNB1. The chain is Forkhead box protein F2 (Foxf2) from Mus musculus (Mouse).